A 213-amino-acid chain; its full sequence is Nucleolar protein 12 (213 aa).

A coiled-coil region spans residues 32 to 95 (GFHKRKVERK…RLVTAKTESV (64 aa)). The segment at 117–213 (ARLLGLPTPE…LTGKARHSGE (97 aa)) is disordered. Basic residues-rich tracts occupy residues 169-181 (AHSRKKVKKKRLR) and 197-213 (SKTRRRRLTGKARHSGE).

This sequence belongs to the RRP17 family. Interacts with KIAA1191.

It localises to the nucleus. The protein localises to the nucleolus. It is found in the cytoplasm. Multifunctional RNA binding protein that plays a role in RNA metabolism and DNA maintenance. Participates in the resolution of DNA stress and the maintenance of genome integrity by localizing to sites of DNA insults. Also plays a role in proper nucleolar organization by limiting nucleolar size and regulating nucleolar number. Mechanistically, regulates the nucleolar levels of fibrillarin and nucleolin, two key players in pre-rRNA processing and ribosome assembly. In Bos taurus (Bovine), this protein is Nucleolar protein 12 (NOL12).